A 64-amino-acid polypeptide reads, in one-letter code: DNA gyrase inhibitor YacG (64 aa).

Zn(2+)-binding residues include cysteine 7, cysteine 10, cysteine 26, and cysteine 30. Positions 44–64 are disordered; the sequence is SIPGEPVVIANDDYNNEESDY.

This sequence belongs to the DNA gyrase inhibitor YacG family. Interacts with GyrB. The cofactor is Zn(2+).

Functionally, inhibits all the catalytic activities of DNA gyrase by preventing its interaction with DNA. Acts by binding directly to the C-terminal domain of GyrB, which probably disrupts DNA binding by the gyrase. This Idiomarina loihiensis (strain ATCC BAA-735 / DSM 15497 / L2-TR) protein is DNA gyrase inhibitor YacG.